The sequence spans 285 residues: 4-diphosphocytidyl-2-C-methyl-D-erythritol kinase (285 aa).

Lys10 is an active-site residue. 93 to 103 (PIGGGLGGGSS) is a binding site for ATP. Asp135 is an active-site residue.

It belongs to the GHMP kinase family. IspE subfamily.

The enzyme catalyses 4-CDP-2-C-methyl-D-erythritol + ATP = 4-CDP-2-C-methyl-D-erythritol 2-phosphate + ADP + H(+). Its pathway is isoprenoid biosynthesis; isopentenyl diphosphate biosynthesis via DXP pathway; isopentenyl diphosphate from 1-deoxy-D-xylulose 5-phosphate: step 3/6. Its function is as follows. Catalyzes the phosphorylation of the position 2 hydroxy group of 4-diphosphocytidyl-2C-methyl-D-erythritol. This chain is 4-diphosphocytidyl-2-C-methyl-D-erythritol kinase, found in Vesicomyosocius okutanii subsp. Calyptogena okutanii (strain HA).